A 1166-amino-acid chain; its full sequence is IQ domain-containing protein N (1166 aa).

The span at 1–19 (MQPATQLQFTNHLSPNGQC) shows a compositional bias: polar residues. The tract at residues 1–56 (MQPATQLQFTNHLSPNGQCILQPPPTPSLPDKMEKAPPQPQHEGLKSEEHLPQQPA) is disordered. Positions 89–118 (HARAATLIQANWRGYRLRQKLISQMTAAKA) constitute an IQ 1 domain. 3 disordered regions span residues 431-450 (VCPG…VATP), 769-797 (LSAP…TTQG), and 829-848 (DSGA…PCQE). IQ domains lie at 907 to 932 (AVTT…RRAT), 928 to 955 (HRRA…RATT), 952 to 979 (RATT…MLHP), 1091 to 1119 (RDKA…MAAK), and 1114 to 1143 (QQMA…LLGP). Residues 1145–1166 (DPWSSSQHMHWASSQHTHWPGI) are disordered. The segment covering 1147 to 1166 (WSSSQHMHWASSQHTHWPGI) has biased composition (polar residues).

In terms of assembly, interacts with calmodulin.

Essential for spermiogenesis and fertilization. May be required for manchette assembly in elongating spermatids. The chain is IQ domain-containing protein N (IQCN) from Macaca fascicularis (Crab-eating macaque).